The primary structure comprises 320 residues: Malate dehydrogenase (320 aa).

NAD(+) is bound by residues 10–15 (GSGMIG) and Asp-34. Substrate is bound by residues Arg-83 and Arg-89. NAD(+) is bound by residues Asn-96 and 119–121 (ITN). Residues Asn-121 and Arg-152 each contribute to the substrate site. The Proton acceptor role is filled by His-176.

This sequence belongs to the LDH/MDH superfamily. MDH type 3 family.

The catalysed reaction is (S)-malate + NAD(+) = oxaloacetate + NADH + H(+). Catalyzes the reversible oxidation of malate to oxaloacetate. This chain is Malate dehydrogenase, found in Rhizobium johnstonii (strain DSM 114642 / LMG 32736 / 3841) (Rhizobium leguminosarum bv. viciae).